The primary structure comprises 327 residues: uncharacterized protein (327 aa).

The signal sequence occupies residues 1–24 (MKQPGFIRLATLALLSTLSFFSHG).

This is an uncharacterized protein from Salmonella typhimurium (strain LT2 / SGSC1412 / ATCC 700720).